The primary structure comprises 367 residues: UDP-N-acetylglucosamine--N-acetylmuramyl-(pentapeptide) pyrophosphoryl-undecaprenol N-acetylglucosamine transferase (367 aa).

UDP-N-acetyl-alpha-D-glucosamine contacts are provided by residues 22-24 (TGG), asparagine 134, arginine 170, serine 198, isoleucine 253, and glutamine 298.

This sequence belongs to the glycosyltransferase 28 family. MurG subfamily.

It is found in the cell inner membrane. The catalysed reaction is di-trans,octa-cis-undecaprenyl diphospho-N-acetyl-alpha-D-muramoyl-L-alanyl-D-glutamyl-meso-2,6-diaminopimeloyl-D-alanyl-D-alanine + UDP-N-acetyl-alpha-D-glucosamine = di-trans,octa-cis-undecaprenyl diphospho-[N-acetyl-alpha-D-glucosaminyl-(1-&gt;4)]-N-acetyl-alpha-D-muramoyl-L-alanyl-D-glutamyl-meso-2,6-diaminopimeloyl-D-alanyl-D-alanine + UDP + H(+). It participates in cell wall biogenesis; peptidoglycan biosynthesis. Its function is as follows. Cell wall formation. Catalyzes the transfer of a GlcNAc subunit on undecaprenyl-pyrophosphoryl-MurNAc-pentapeptide (lipid intermediate I) to form undecaprenyl-pyrophosphoryl-MurNAc-(pentapeptide)GlcNAc (lipid intermediate II). This is UDP-N-acetylglucosamine--N-acetylmuramyl-(pentapeptide) pyrophosphoryl-undecaprenol N-acetylglucosamine transferase from Xylella fastidiosa (strain M23).